Reading from the N-terminus, the 260-residue chain is UPF0246 protein APP7_0648 (260 aa).

Belongs to the UPF0246 family.

This Actinobacillus pleuropneumoniae serotype 7 (strain AP76) protein is UPF0246 protein APP7_0648.